The following is a 37-amino-acid chain: Large ribosomal subunit protein bL36c (37 aa).

Belongs to the bacterial ribosomal protein bL36 family.

The protein resides in the plastid. It localises to the chloroplast. The protein is Large ribosomal subunit protein bL36c of Gnetum parvifolium (Small-leaved jointfir).